An 81-amino-acid chain; its full sequence is Tissue- and phase-specific nuclear protein (81 aa).

In terms of tissue distribution, expressed in oviduct, where expression levels are higher in uterine sections than in tuba sections. No expression detected in small intestine and liver (at protein level).

It is found in the nucleus. This is Tissue- and phase-specific nuclear protein from Podarcis siculus (Italian wall lizard).